The chain runs to 436 residues: Tol-Pal system protein TolB (436 aa).

The first 28 residues, 1-28 (MEMLRRNFFRLLMVLVAGCGLIASPANA), serve as a signal peptide directing secretion.

It belongs to the TolB family. As to quaternary structure, the Tol-Pal system is composed of five core proteins: the inner membrane proteins TolA, TolQ and TolR, the periplasmic protein TolB and the outer membrane protein Pal. They form a network linking the inner and outer membranes and the peptidoglycan layer.

It is found in the periplasm. Its function is as follows. Part of the Tol-Pal system, which plays a role in outer membrane invagination during cell division and is important for maintaining outer membrane integrity. This is Tol-Pal system protein TolB from Rhizobium meliloti (strain 1021) (Ensifer meliloti).